The following is a 205-amino-acid chain: N-(5'-phosphoribosyl)anthranilate isomerase (205 aa).

This sequence belongs to the TrpF family.

The enzyme catalyses N-(5-phospho-beta-D-ribosyl)anthranilate = 1-(2-carboxyphenylamino)-1-deoxy-D-ribulose 5-phosphate. Its pathway is amino-acid biosynthesis; L-tryptophan biosynthesis; L-tryptophan from chorismate: step 3/5. This is N-(5'-phosphoribosyl)anthranilate isomerase from Phocaeicola vulgatus (strain ATCC 8482 / DSM 1447 / JCM 5826 / CCUG 4940 / NBRC 14291 / NCTC 11154) (Bacteroides vulgatus).